A 927-amino-acid polypeptide reads, in one-letter code: Phospholipase D beta 2 (927 aa).

Residues 104–237 (PFGKASLKVL…YSGARIEGTY (134 aa)) form the C2 domain. Asp299 lines the Ca(2+) pocket. In terms of domain architecture, PLD phosphodiesterase 1 spans 439–474 (TIYTHHQKNLIVDADAGGNRRKIVAFVGGLDLCDGR). Residues His444, Lys446, and Asp451 contribute to the active site. Position 444 (His444) interacts with a 1,2-diacyl-sn-glycero-3-phosphate. Residues His480 and His512 each coordinate Ca(2+). Residues Gln640 and His778 each contribute to the a 1,2-diacyl-sn-glycero-3-phosphate site. Residues 773–800 (FMIYVHSKGMVVDDEYVVIGSANINQRS) enclose the PLD phosphodiesterase 2 domain. Catalysis depends on residues His778, Lys780, and Asp785. Glu841 contributes to the Ca(2+) binding site.

It belongs to the phospholipase D family. C2-PLD subfamily. Requires Ca(2+) as cofactor. Expressed in stems, and to a lower amount in leaves, flowers and siliques.

It localises to the cytoplasm. Its subcellular location is the membrane. The catalysed reaction is a 1,2-diacyl-sn-glycero-3-phosphocholine + H2O = a 1,2-diacyl-sn-glycero-3-phosphate + choline + H(+). Its activity is regulated as follows. Inhibited by neomycin. In terms of biological role, hydrolyzes glycerol-phospholipids at the terminal phosphodiesteric bond to generate phosphatidic acids (PA). Plays an important role in various cellular processes, including phytohormone action, vesicular trafficking, secretion, cytoskeletal arrangement, meiosis, tumor promotion, pathogenesis, membrane deterioration and senescence. Can use phosphatidylserine or N-acylphosphatidylethanolamine as substrates. This chain is Phospholipase D beta 2, found in Arabidopsis thaliana (Mouse-ear cress).